Consider the following 182-residue polypeptide: Ribosome maturation factor RimP (182 aa).

The protein belongs to the RimP family.

The protein resides in the cytoplasm. Functionally, required for maturation of 30S ribosomal subunits. The sequence is that of Ribosome maturation factor RimP from Chloroherpeton thalassium (strain ATCC 35110 / GB-78).